We begin with the raw amino-acid sequence, 481 residues long: Aspartyl/glutamyl-tRNA(Asn/Gln) amidotransferase subunit B (481 aa).

This sequence belongs to the GatB/GatE family. GatB subfamily. As to quaternary structure, heterotrimer of A, B and C subunits.

It carries out the reaction L-glutamyl-tRNA(Gln) + L-glutamine + ATP + H2O = L-glutaminyl-tRNA(Gln) + L-glutamate + ADP + phosphate + H(+). The catalysed reaction is L-aspartyl-tRNA(Asn) + L-glutamine + ATP + H2O = L-asparaginyl-tRNA(Asn) + L-glutamate + ADP + phosphate + 2 H(+). Functionally, allows the formation of correctly charged Asn-tRNA(Asn) or Gln-tRNA(Gln) through the transamidation of misacylated Asp-tRNA(Asn) or Glu-tRNA(Gln) in organisms which lack either or both of asparaginyl-tRNA or glutaminyl-tRNA synthetases. The reaction takes place in the presence of glutamine and ATP through an activated phospho-Asp-tRNA(Asn) or phospho-Glu-tRNA(Gln). The polypeptide is Aspartyl/glutamyl-tRNA(Asn/Gln) amidotransferase subunit B (Pseudomonas entomophila (strain L48)).